The following is a 117-amino-acid chain: Ribosome-binding factor A (117 aa).

The protein belongs to the RbfA family. As to quaternary structure, monomer. Binds 30S ribosomal subunits, but not 50S ribosomal subunits or 70S ribosomes.

The protein resides in the cytoplasm. Its function is as follows. One of several proteins that assist in the late maturation steps of the functional core of the 30S ribosomal subunit. Associates with free 30S ribosomal subunits (but not with 30S subunits that are part of 70S ribosomes or polysomes). Required for efficient processing of 16S rRNA. May interact with the 5'-terminal helix region of 16S rRNA. The sequence is that of Ribosome-binding factor A from Streptococcus suis (strain 98HAH33).